We begin with the raw amino-acid sequence, 912 residues long: Phosphatidylinositol-3-phosphatase SAC1 (912 aa).

The tract at residues 1–29 is disordered; sequence MAKSENSTTSTFSSFANKIQPSNDAESDP. Positions 173–575 constitute an SAC domain; that stretch reads LSSVDLTKDF…GDALAQQYGG (403 aa). The Phosphatase catalytic core signature appears at 511–522; the sequence is RTNCIDCLDRTN. The tract at residues 715-912 is required for subcellular localization; it reads RPGGNTGSTG…VGDDKVPKVI (198 aa). Positions 740–766 are disordered; sequence LFGSRKPEESSSATKSGADDSEKGVTS.

In terms of assembly, component of the PI(3,5)P2 regulatory complex at least composed of ATG18, SAC/FIG4, FAB1 and VAC14. The cofactor is Mg(2+). Ubiquitous with higher expression level in both young elongating and nonelongating stems. Detected in vascular tissues.

The protein localises to the vacuole membrane. It is found in the golgi apparatus. The catalysed reaction is a 1,2-diacyl-sn-glycero-3-phospho-(1D-myo-inositol-3-phosphate) + H2O = a 1,2-diacyl-sn-glycero-3-phospho-(1D-myo-inositol) + phosphate. It catalyses the reaction a 1,2-diacyl-sn-glycero-3-phospho-(1D-myo-inositol-3,5-bisphosphate) + H2O = a 1,2-diacyl-sn-glycero-3-phospho-(1D-myo-inositol-3-phosphate) + phosphate. The enzyme catalyses a 1,2-diacyl-sn-glycero-3-phospho-(1D-myo-inositol 4-phosphate) + H2O = a 1,2-diacyl-sn-glycero-3-phospho-(1D-myo-inositol) + phosphate. Its function is as follows. Phosphoinositide phosphatase which catalyzes the hydrolysis of phosphatidylinositol-3,5-bisphosphate (PtdIns(3,5)P2). Can also catalyze the hydrolysis of phosphatidylinositol 3-phosphate (PtdIns(3)P) and phosphatidylinositol 4-phosphate (PtdIns(4)P). Required for normal cell morphogenesis, cell wall synthesis, and actin organization. This is Phosphatidylinositol-3-phosphatase SAC1 (SAC1) from Arabidopsis thaliana (Mouse-ear cress).